A 66-amino-acid polypeptide reads, in one-letter code: uncharacterized protein (66 aa).

A signal peptide spans 1 to 19 (MRRLYRHLASFFLLPSCPG).

This is an uncharacterized protein from Saccharomyces cerevisiae (strain ATCC 204508 / S288c) (Baker's yeast).